The following is a 147-amino-acid chain: Acidic phospholipase A2 S9-53F (147 aa).

The N-terminal stretch at 1–19 is a signal peptide; that stretch reads MYPAHLLVLLAVCVSLLGA. A propeptide spanning residues 20 to 27 is cleaved from the precursor; sequence SDIPPQPL. Intrachain disulfides connect cysteine 38–cysteine 99, cysteine 54–cysteine 146, cysteine 56–cysteine 72, cysteine 71–cysteine 127, cysteine 78–cysteine 120, cysteine 88–cysteine 113, and cysteine 106–cysteine 118. The Ca(2+) site is built by tyrosine 55, glycine 57, and glycine 59. Histidine 75 is a catalytic residue. Residue aspartate 76 coordinates Ca(2+). Residue aspartate 121 is part of the active site.

Belongs to the phospholipase A2 family. Group I subfamily. D49 sub-subfamily. It depends on Ca(2+) as a cofactor. As to expression, expressed by the venom gland.

Its subcellular location is the secreted. It carries out the reaction a 1,2-diacyl-sn-glycero-3-phosphocholine + H2O = a 1-acyl-sn-glycero-3-phosphocholine + a fatty acid + H(+). Functionally, snake venom phospholipase A2 (PLA2) that inhibits collagen-induced platelet aggregation. PLA2 catalyzes the calcium-dependent hydrolysis of the 2-acyl groups in 3-sn-phosphoglycerides. The protein is Acidic phospholipase A2 S9-53F of Austrelaps superbus (Lowland copperhead snake).